The chain runs to 216 residues: Adenylate kinase (216 aa).

Residue 10-15 coordinates ATP; it reads GAGKGT. The NMP stretch occupies residues 30 to 59; sequence STGDIFRANIKEKTPLGIEAKRYIDNGQLV. Residues T31, R36, 57 to 59, 85 to 88, and Q92 contribute to the AMP site; these read QLV and GFPR. The segment at 126 to 163 is LID; the sequence is GRRVCTSCGASYHIRFNPPKIEGKCDICDNELIQRKDD. Position 127 (R127) interacts with ATP. Zn(2+) contacts are provided by C130 and C133. Residue 136–137 coordinates ATP; that stretch reads SY. Zn(2+) contacts are provided by C150 and C153. AMP-binding residues include R160 and R171. E199 lines the ATP pocket.

Belongs to the adenylate kinase family. In terms of assembly, monomer.

Its subcellular location is the cytoplasm. It catalyses the reaction AMP + ATP = 2 ADP. It functions in the pathway purine metabolism; AMP biosynthesis via salvage pathway; AMP from ADP: step 1/1. In terms of biological role, catalyzes the reversible transfer of the terminal phosphate group between ATP and AMP. Plays an important role in cellular energy homeostasis and in adenine nucleotide metabolism. In Clostridium botulinum (strain 657 / Type Ba4), this protein is Adenylate kinase.